The chain runs to 73 residues: Salivary protein FS48 (73 aa).

The signal sequence occupies residues 1–21 (MKFAFAIFVVLAILHTELISA).

The protein localises to the secreted. Its function is as follows. Salivary protein that inhibits host voltage-gated potassium channels Kv1.1/KCNA1, Kv1.2/KCNA2 and Kv1.3/KCNA3 likely via a voltage-independent pore-blocking mechanism. Suppresses expression of the Kv1.3/KCNA3 channel in lipopolysaccharide (LPS)-stimulated mouse macrophages and human T-cells. Down-regulates secretion of nitric oxide (NO) and inflammatory cytokines, such as TNF-alpha/TNF, IL-1beta/IL1B and IL6, in LPS-stimulated mouse macrophages in a manner dependent on Kv1.3/KCNA3 channel blockage. Reduces activation of MAPK and NF-kappa-B signaling pathways in LPS-stimulated mouse macrophages. Modulates intracellular Ca(2+) signaling in human PMA/ionomycin-triggered T-cells. Interferes with the activation of the MAPK, NF-kappa-B and NFATc1 pathways in human PMA/ionomycin-triggered T-cells. Reduces proliferation of human PMA/ionomycin-triggered T-cells. Down-regulates secretion of cytokines, such as TNF-alpha/TNF and IL2, in human PMA/ionomycin-triggered T-cells. This Xenopsylla cheopis (Oriental rat flea) protein is Salivary protein FS48.